A 660-amino-acid polypeptide reads, in one-letter code: Methionine--tRNA ligase 1 (660 aa).

The 'HIGH' region motif lies at 15-25; the sequence is YYPSGKLHIGH. The 'KMSKS' region signature appears at 310–314; sequence KMSKS. Lys-313 contacts ATP. A tRNA-binding domain is found at 560–660; the sequence is DFFKVELRVA…QNIPNGTKIK (101 aa).

This sequence belongs to the class-I aminoacyl-tRNA synthetase family. MetG type 2B subfamily. In terms of assembly, homodimer.

Its subcellular location is the cytoplasm. The enzyme catalyses tRNA(Met) + L-methionine + ATP = L-methionyl-tRNA(Met) + AMP + diphosphate. In terms of biological role, is required not only for elongation of protein synthesis but also for the initiation of all mRNA translation through initiator tRNA(fMet) aminoacylation. The sequence is that of Methionine--tRNA ligase 1 from Bacillus anthracis.